The sequence spans 512 residues: MATDIDMLIDLGLDLSDSELEEDALERDEEGRRDDPESDSSGECSSSDEDMEDPCGDGGAEAIDAAIPKGPPARPEDAGTPEASTPRPAARRGADDPPPATTGVWSRLGTRRSASPREPHGGKVARIQPPSTKAPHPRGGRRGRRRGRGRYGPGGADSTPKPRRRVSRNAHNQGGRHPASARTDGPGATHGEARRGGEQLDVSGGPRPRGTRQAPPPLMALSLTPPHADGRAPVPERKAPSADTIDPAVRAVLRSISERAAVERISESFGRSALVMQDPFGGMPFPAANSPWAPVLATQAGGFDAETRRVSWETLVAHGPSLYRTFAANPRAASTAKAMRDCVLRQENLIEALASADETLAWCKMCIHHNLPLRPQDPIIGTAAAVLENLATRLRPFLQCYLKARGLCGLDDLCSRRRLSDIKDIASFVLVILARLANRVERGVSEIDYTTVGVGAGETMHFYIPGACMAGLIEILDTHRQECSSRVCELTASHTIAPLYVHGKYFYCNSLF.

The segment at methionine 1–alanine 242 is disordered. A Nuclear export signal motif is present at residues isoleucine 5–aspartate 17. Serine 16 and serine 18 each carry phosphoserine; by host. Acidic residues-rich tracts occupy residues serine 16–aspartate 28 and proline 36–cysteine 55. Residues valine 104 to arginine 112 form an interaction with host ALYREF region. A Nuclear localization signal motif is present at residues threonine 110 to arginine 138. Residue serine 113 is modified to Phosphoserine; by host. A compositionally biased stretch (basic residues) spans proline 135–glycine 149. Arginine 138 carries the post-translational modification Dimethylated arginine; by host. Residues arginine 138 to glycine 152 are RGG-box. At arginine 148 the chain carries Omega-N-methylarginine; by host. Arginine 150 carries the dimethylated arginine; by host modification. Over residues alanine 228–proline 240 the composition is skewed to basic and acidic residues. Residues cysteine 400, histidine 479, cysteine 483, and cysteine 488 each coordinate Zn(2+). The CHC2-type zinc finger occupies cysteine 400 to cysteine 488.

This sequence belongs to the HHV-1 ICP27 protein family. As to quaternary structure, interacts with host RBP1; this interaction facilitates the RNA polymerase recruitment to viral transcription sites. Interacts (via the RGG box) with host ALYREF/THOC4; this interaction recruits ALYREF to viral replication compartments and probably directs viral mRNA to the TAP/NFX1 pathway. Interacts (via the RGG box) with host SRPK1; this interaction relocalizes SRPK1 to the nucleus and seems to alter its activity. Interacts with ICP4; this interaction modulates ICP4 DNA-binding activity. Interacts with host NXF1; this interaction allows efficient export of HSV-1 early and late transcripts. Interacts with host IRF3; this interaction inhibits IRF3 phosphorylation and nuclear translocation. Methylated within the RGG box possibly by host PRMT1. When hypomethylated, ICP27 is exported to the cytoplasm earlier and more rapidly. Post-translationally, phosphorylated.

Its subcellular location is the host cytoplasm. It is found in the host nucleus. Functionally, multifunctional regulator of the expression of viral genes that contributes to the shutoff of host protein synthesis and mediates nuclear export of viral intronless mRNAs. Also stimulates translation of viral transcripts. Independently, plays a role in the regulation of virion release. Also plays a role in the inhibition of host innate immune response by targeting host IRF3 and thereby preventing production of beta-interferon. Silences the 3' splice site of the host promyelocytic leukemia (PML) intron 7a, thereby switching PML isoforms from PML-II to PML-V. This could be linked to the accelerated mRNA export induced by ICP27 which might not provide sufficient time for PML pre-mRNA to be spliced in the nucleus. Also suppresses splicing of the viral ICP34.5 mRNA, allowing the virus to express a variant form of ICP34.5. The chain is mRNA export factor from Human herpesvirus 2 (strain HG52) (HHV-2).